We begin with the raw amino-acid sequence, 357 residues long: tRNA-specific 2-thiouridylase MnmA (357 aa).

ATP contacts are provided by residues 8–15 and isoleucine 34; that span reads GISGGVDS. Residue cysteine 96 is the Nucleophile of the active site. A disulfide bond links cysteine 96 and cysteine 192. Residue glycine 120 coordinates ATP. Residues 142 to 144 form an interaction with tRNA region; it reads KDQ. Catalysis depends on cysteine 192, which acts as the Cysteine persulfide intermediate. An interaction with tRNA region spans residues 301-302; sequence RY.

Belongs to the MnmA/TRMU family.

It localises to the cytoplasm. The enzyme catalyses S-sulfanyl-L-cysteinyl-[protein] + uridine(34) in tRNA + AH2 + ATP = 2-thiouridine(34) in tRNA + L-cysteinyl-[protein] + A + AMP + diphosphate + H(+). Its function is as follows. Catalyzes the 2-thiolation of uridine at the wobble position (U34) of tRNA, leading to the formation of s(2)U34. In Chlorobium phaeobacteroides (strain DSM 266 / SMG 266 / 2430), this protein is tRNA-specific 2-thiouridylase MnmA.